We begin with the raw amino-acid sequence, 228 residues long: Putative elongation factor Tu-like protein (228 aa).

The 207-residue stretch at 6-212 (KPHINVGTIG…LPIREKDNPF (207 aa)) folds into the tr-type G domain. Residues 15–22 (GHVDHGKT) form a G1 region. Residues 59 to 63 (GITIS) form a G2 region. Positions 80–83 (DCPG) are G3. The tract at residues 135–138 (NKCD) is G4. The interval 173-175 (SAV) is G5.

Belongs to the TRAFAC class translation factor GTPase superfamily. Classic translation factor GTPase family. EF-Tu/EF-1A subfamily.

This is Putative elongation factor Tu-like protein from Ehrlichia ruminantium (strain Welgevonden).